The sequence spans 439 residues: Serine--tRNA ligase (439 aa).

242–244 (TAE) lines the L-serine pocket. Position 273–275 (273–275 (RQE)) interacts with ATP. An L-serine-binding site is contributed by Glu296. Residue 360–363 (EISS) participates in ATP binding. Ser396 serves as a coordination point for L-serine.

It belongs to the class-II aminoacyl-tRNA synthetase family. Type-1 seryl-tRNA synthetase subfamily. As to quaternary structure, homodimer. The tRNA molecule binds across the dimer.

It is found in the cytoplasm. The enzyme catalyses tRNA(Ser) + L-serine + ATP = L-seryl-tRNA(Ser) + AMP + diphosphate + H(+). It catalyses the reaction tRNA(Sec) + L-serine + ATP = L-seryl-tRNA(Sec) + AMP + diphosphate + H(+). The protein operates within aminoacyl-tRNA biosynthesis; selenocysteinyl-tRNA(Sec) biosynthesis; L-seryl-tRNA(Sec) from L-serine and tRNA(Sec): step 1/1. Functionally, catalyzes the attachment of serine to tRNA(Ser). Is also able to aminoacylate tRNA(Sec) with serine, to form the misacylated tRNA L-seryl-tRNA(Sec), which will be further converted into selenocysteinyl-tRNA(Sec). The polypeptide is Serine--tRNA ligase (Oenococcus oeni (strain ATCC BAA-331 / PSU-1)).